We begin with the raw amino-acid sequence, 86 residues long: Defensin-like SRCA-homolog protein (86 aa).

The first 26 residues, 1–26 (MRCVVLFMVSCLLIVLLINHFEEVEA), serve as a signal peptide directing secretion. Intrachain disulfides connect Cys-32-Cys-84, Cys-42-Cys-70, Cys-52-Cys-79, and Cys-68-Cys-81.

It belongs to the DEFL family.

It is found in the secreted. In terms of biological role, involved in male-mediated self-incompatibility. This chain is Defensin-like SRCA-homolog protein (SCR37), found in Arabidopsis lyrata (Lyre-leaved rock-cress).